A 322-amino-acid polypeptide reads, in one-letter code: Undecaprenyl-phosphate 4-deoxy-4-formamido-L-arabinose transferase (322 aa).

Residues 1–235 (MFEIHPVKKV…TCLTTTPLRM (235 aa)) lie on the Cytoplasmic side of the membrane. Residues 236–256 (LSLLGSIIAIGGFSIAVLLVI) traverse the membrane as a helical segment. Over 257–269 (LRLTFGPQWAAEG) the chain is Periplasmic. A helical membrane pass occupies residues 270-290 (VFMLFAVLFTFIGAQFIGMGL). The Cytoplasmic segment spans residues 291–322 (LGEYIGRIYTDVRARPRYFVQQVIRPSSKENE).

It belongs to the glycosyltransferase 2 family.

It is found in the cell inner membrane. It carries out the reaction UDP-4-deoxy-4-formamido-beta-L-arabinose + di-trans,octa-cis-undecaprenyl phosphate = 4-deoxy-4-formamido-alpha-L-arabinopyranosyl di-trans,octa-cis-undecaprenyl phosphate + UDP. It participates in glycolipid biosynthesis; 4-amino-4-deoxy-alpha-L-arabinose undecaprenyl phosphate biosynthesis; 4-amino-4-deoxy-alpha-L-arabinose undecaprenyl phosphate from UDP-4-deoxy-4-formamido-beta-L-arabinose and undecaprenyl phosphate: step 1/2. The protein operates within bacterial outer membrane biogenesis; lipopolysaccharide biosynthesis. Its function is as follows. Catalyzes the transfer of 4-deoxy-4-formamido-L-arabinose from UDP to undecaprenyl phosphate. The modified arabinose is attached to lipid A and is required for resistance to polymyxin and cationic antimicrobial peptides. The polypeptide is Undecaprenyl-phosphate 4-deoxy-4-formamido-L-arabinose transferase (Escherichia coli O7:K1 (strain IAI39 / ExPEC)).